The primary structure comprises 888 residues: Aconitate hydratase A (888 aa).

The [4Fe-4S] cluster site is built by C433, C499, and C502.

It belongs to the aconitase/IPM isomerase family. In terms of assembly, monomer. [4Fe-4S] cluster is required as a cofactor.

It carries out the reaction citrate = D-threo-isocitrate. The catalysed reaction is (2S,3R)-3-hydroxybutane-1,2,3-tricarboxylate = 2-methyl-cis-aconitate + H2O. It functions in the pathway carbohydrate metabolism; tricarboxylic acid cycle; isocitrate from oxaloacetate: step 2/2. Its pathway is organic acid metabolism; propanoate degradation. Its function is as follows. Involved in the catabolism of short chain fatty acids (SCFA) via the tricarboxylic acid (TCA)(acetyl degradation route) and probably the 2-methylcitrate cycle I (propionate degradation route). Catalyzes the reversible isomerization of citrate to isocitrate via cis-aconitate. Could catalyze the hydration of 2-methyl-cis-aconitate to yield (2R,3S)-2-methylisocitrate. The apo form of AcnA functions as a RNA-binding regulatory protein. The sequence is that of Aconitate hydratase A (acn) from Streptococcus mutans serotype c (strain ATCC 700610 / UA159).